The sequence spans 181 residues: Protein GrpE (181 aa).

It belongs to the GrpE family. As to quaternary structure, homodimer.

It localises to the cytoplasm. Its function is as follows. Participates actively in the response to hyperosmotic and heat shock by preventing the aggregation of stress-denatured proteins, in association with DnaK and GrpE. It is the nucleotide exchange factor for DnaK and may function as a thermosensor. Unfolded proteins bind initially to DnaJ; upon interaction with the DnaJ-bound protein, DnaK hydrolyzes its bound ATP, resulting in the formation of a stable complex. GrpE releases ADP from DnaK; ATP binding to DnaK triggers the release of the substrate protein, thus completing the reaction cycle. Several rounds of ATP-dependent interactions between DnaJ, DnaK and GrpE are required for fully efficient folding. This Verminephrobacter eiseniae (strain EF01-2) protein is Protein GrpE.